A 221-amino-acid chain; its full sequence is Small ribosomal subunit protein uS4c (221 aa).

Residues 26-53 are disordered; it reads RKRTDNRCMPGQHRKKRNDSTKKTKNSK. Basic residues predominate over residues 37-53; that stretch reads QHRKKRNDSTKKTKNSK. The 59-residue stretch at 103–161 folds into the S4 RNA-binding domain; it reads MRLDNIVFRLGMAPTIPAARQLVNHGHIVVNNKKVDISSYQCQSQDVISVTKNKTIRTL.

The protein belongs to the universal ribosomal protein uS4 family. As to quaternary structure, part of the 30S ribosomal subunit. Contacts protein S5. The interaction surface between S4 and S5 is involved in control of translational fidelity.

It is found in the plastid. Its subcellular location is the chloroplast. In terms of biological role, one of the primary rRNA binding proteins, it binds directly to 16S rRNA where it nucleates assembly of the body of the 30S subunit. With S5 and S12 plays an important role in translational accuracy. The polypeptide is Small ribosomal subunit protein uS4c (rps4) (Pleurastrum terricola (Filamentous green alga)).